The chain runs to 252 residues: Enolase-phosphatase E1 (252 aa).

Positions 14 and 16 each coordinate Mg(2+). Substrate-binding positions include 143–144 and Lys177; that span reads SS. Asp202 provides a ligand contact to Mg(2+).

Belongs to the HAD-like hydrolase superfamily. MasA/MtnC family. Monomer. Mg(2+) serves as cofactor.

The protein localises to the cytoplasm. The protein resides in the nucleus. It catalyses the reaction 5-methylsulfanyl-2,3-dioxopentyl phosphate + H2O = 1,2-dihydroxy-5-(methylsulfanyl)pent-1-en-3-one + phosphate. It functions in the pathway amino-acid biosynthesis; L-methionine biosynthesis via salvage pathway; L-methionine from S-methyl-5-thio-alpha-D-ribose 1-phosphate: step 3/6. The protein operates within amino-acid biosynthesis; L-methionine biosynthesis via salvage pathway; L-methionine from S-methyl-5-thio-alpha-D-ribose 1-phosphate: step 4/6. Bifunctional enzyme that catalyzes the enolization of 2,3-diketo-5-methylthiopentyl-1-phosphate (DK-MTP-1-P) into the intermediate 2-hydroxy-3-keto-5-methylthiopentenyl-1-phosphate (HK-MTPenyl-1-P), which is then dephosphorylated to form the acireductone 1,2-dihydroxy-3-keto-5-methylthiopentene (DHK-MTPene). The polypeptide is Enolase-phosphatase E1 (Drosophila persimilis (Fruit fly)).